The chain runs to 313 residues: D-alanine--D-alanine ligase (313 aa).

An ATP-grasp domain is found at 104 to 304 (KQALVPHGIP…YSDLVEAIIA (201 aa)). 130 to 187 (PLPRPYVLKPVNEGSSVGVAIVTAEGNYGSPISAASKGPWQEFDQLLAEPFIRGRELT) serves as a coordination point for ATP. 3 residues coordinate Mg(2+): Asp255, Glu271, and Asn273.

The protein belongs to the D-alanine--D-alanine ligase family. The cofactor is Mg(2+). Mn(2+) is required as a cofactor.

The protein localises to the cytoplasm. The catalysed reaction is 2 D-alanine + ATP = D-alanyl-D-alanine + ADP + phosphate + H(+). The protein operates within cell wall biogenesis; peptidoglycan biosynthesis. Functionally, cell wall formation. The protein is D-alanine--D-alanine ligase of Novosphingobium aromaticivorans (strain ATCC 700278 / DSM 12444 / CCUG 56034 / CIP 105152 / NBRC 16084 / F199).